A 509-amino-acid chain; its full sequence is 5-OH-xanthotoxin synthase (509 aa).

A helical transmembrane segment spans residues 5-25; sequence AVVILLILAFPIASVYVLFYH. The substrate specificity stretch occupies residues 368–373; that stretch reads TGALLI. C449 is a binding site for heme.

The protein belongs to the cytochrome P450 family. It depends on heme as a cofactor.

It localises to the microsome membrane. It carries out the reaction xanthotoxin + reduced [NADPH--hemoprotein reductase] + O2 = 5-hydroxyxanthotoxin + oxidized [NADPH--hemoprotein reductase] + H2O + 2 H(+). Its pathway is secondary metabolite biosynthesis. In terms of biological role, involved in the biosynthesis of coumarins and furanocoumarins (FCs), natural products required for defense responses against attacks by predators with potential medical and agroindustrial usages such as anticoagulant, rodenticide and artificial vanilla substitutes. Catalyzes the conversion of xanthotoxin into 5-hydroxyxanthotoxin. The protein is 5-OH-xanthotoxin synthase of Ammi majus (Bishop's weed).